A 441-amino-acid polypeptide reads, in one-letter code: Mannose-6-phosphate isomerase (441 aa).

Zn(2+) contacts are provided by Gln111, His113, Glu138, and His285. Residue Arg304 is part of the active site.

The protein belongs to the mannose-6-phosphate isomerase type 1 family. In terms of assembly, monomer. Zn(2+) serves as cofactor.

The protein localises to the cytoplasm. The enzyme catalyses D-mannose 6-phosphate = D-fructose 6-phosphate. It participates in nucleotide-sugar biosynthesis; GDP-alpha-D-mannose biosynthesis; alpha-D-mannose 1-phosphate from D-fructose 6-phosphate: step 1/2. Involved in the synthesis of the GDP-mannose and dolichol-phosphate-mannose required for a number of critical mannosyl transfer reactions. The protein is Mannose-6-phosphate isomerase (PMI1) of Candida albicans (strain SC5314 / ATCC MYA-2876) (Yeast).